The primary structure comprises 171 residues: uncharacterized protein (171 aa).

The N-terminal stretch at 1–20 (MRDFYLFLGAVFLLVLGVWA) is a signal peptide.

This is an uncharacterized protein from Aquifex aeolicus (strain VF5).